The chain runs to 223 residues: UPF0502 protein Sbal_1765 (223 aa).

Belongs to the UPF0502 family.

The sequence is that of UPF0502 protein Sbal_1765 from Shewanella baltica (strain OS155 / ATCC BAA-1091).